A 1111-amino-acid chain; its full sequence is Receptor-type guanylate cyclase gcy-7 (1111 aa).

A signal peptide spans 1–24 (MKPFYSMSLVLFLVITLLPKPMFP). Residues 25-488 (QVATGTTGNV…CPKSFVDEYL (464 aa)) are Extracellular-facing. N-linked (GlcNAc...) asparagine glycosylation is found at N80, N300, N326, N353, N389, N407, N430, and N441. Residues 489-509 (IWVIVAIVVLFLAITAAACGI) traverse the membrane as a helical segment. The Cytoplasmic segment spans residues 510-1111 (YFSIQARRQE…TLKSDEQLSD (602 aa)). The 303-residue stretch at 536 to 838 (QINSKQKGKG…NDNLMDHVFN (303 aa)) folds into the Protein kinase domain. ATP-binding positions include 542 to 550 (KGKGEHSVR) and K568. Residues 896 to 1026 (TIFFSDVVQF…DAVNTASRME (131 aa)) enclose the Guanylate cyclase domain.

Belongs to the adenylyl cyclase class-4/guanylyl cyclase family. As to expression, expressed asymmetrically in ASE left (ASEL) sensory neuron. Expressed in excretory canal cell.

It is found in the cell membrane. The enzyme catalyses GTP = 3',5'-cyclic GMP + diphosphate. Guanylate cyclase involved in the production of the second messenger cGMP. Unlike other guanylate cyclases expressed in ASE neurons, may not play a role in chemotaxis responses toward salt ions in ASEL (ASE left) sensory neurons. The polypeptide is Receptor-type guanylate cyclase gcy-7 (Caenorhabditis elegans).